Here is a 236-residue protein sequence, read N- to C-terminus: Small ribosomal subunit protein uS2c (236 aa).

This sequence belongs to the universal ribosomal protein uS2 family.

Its subcellular location is the plastid. It localises to the chloroplast. The chain is Small ribosomal subunit protein uS2c (rps2) from Buxus microphylla (Littleleaf boxwood).